Here is a 464-residue protein sequence, read N- to C-terminus: L-cysteine desulfhydrase-like protein lolT2 (464 aa).

Lys-227 is modified (N6-(pyridoxal phosphate)lysine).

Belongs to the class-V pyridoxal-phosphate-dependent aminotransferase family. Pyridoxal 5'-phosphate serves as cofactor.

Its pathway is alkaloid biosynthesis. Its function is as follows. L-cysteine desulfhydrase-like protein; part of the gene cluster that mediates the biosynthesis of loline alkaloids, potent insecticidal agents composed of a pyrrolizidine ring system and an uncommon ether bridge linking carbons 2 and 7. Lolines are structurally differentiated by the various modifications of the L-amino group and include norloline, loline, N-methylloline, N-acetylloline, N-acetylnorloline, and N-formylloline. The first committed step is the condensation of O-acetyl-L-homoserine (derived from L-aspartic acid) and L-proline, probably catalyzed by the gamma-type pyridoxal 5'-phosphate(PLP)-dependent enzyme lolC, to give the diamino diacid, NACPP. Ensuing cyclization, decarboxylation, and acetylation steps yield 1-exo-acetamidopyrrolizidine (AcAP). LolO is required for installation of the ether bridge upon the pathway intermediate, 1-exo-acetamidopyrrolizidine (AcAP). In sequential 2-oxoglutarate- and O(2)-consuming steps, lolO removes hydrogens from C2 and C7 of AcAP to form both carbon-oxygen bonds in N-acetylnorloline (NANL), the precursor to all other lolines. The enzymes lolD, lolE, lolF and lolT have also been proposed to be involved in the ether-bridge installation. Further processing of the exocyclic moiety of NANL by fungal N-acetamidase (LolN), methyltransferase (LolM), and cytochrome P450 (LolP) enzymes, with occasional involvement of a plant acetyltransferase, generates the other known lolines. LolN transforms NANL to norlonine which is monomethylated and dimethylated to respectively lonine and N-methyllonine (NML) by lolM. LolP catalyzes hydroxylation of the methyl group in N-methylloline (NML) and further oxygenation to N-formylloline (NFL). A plant acetyltransferase is responsible for the acetylation of loline to form N-acetylloline (NAL). LolA might interact with aspartate kinase to prevent feedback inhibition of its activity by these end products and thereby promote production of L-homoserine from L-aspartate. This chain is L-cysteine desulfhydrase-like protein lolT2, found in Epichloe uncinata (Endophyte fungus).